A 440-amino-acid chain; its full sequence is Xylose isomerase (440 aa).

Residues His101 and Asp104 contribute to the active site. Mg(2+) contacts are provided by Glu232, Glu268, His271, Asp296, Asp307, Asp309, and Asp339.

This sequence belongs to the xylose isomerase family. In terms of assembly, homotetramer. The cofactor is Mg(2+).

It is found in the cytoplasm. The enzyme catalyses alpha-D-xylose = alpha-D-xylulofuranose. The chain is Xylose isomerase from Salmonella typhi.